Reading from the N-terminus, the 60-residue chain is Mannitol-specific phosphotransferase enzyme IIA component (60 aa).

One can recognise a PTS EIIA type-2 domain in the interval 2–60 (SELFSNDNIFLNVNVNSQNEAIEKAGKALVDSGAVTDAYIQVVSTFMGNGLAIPHGTDD). His-56 serves as the catalytic Tele-phosphohistidine intermediate. Residue His-56 is modified to Phosphohistidine; by HPr.

Homodimer or homotrimer. Seems to be a monomer when not phosphorylated.

It localises to the cytoplasm. Its function is as follows. The phosphoenolpyruvate-dependent sugar phosphotransferase system (sugar PTS), a major carbohydrate active transport system, catalyzes the phosphorylation of incoming sugar substrates concomitantly with their translocation across the cell membrane. The enzyme II CmtAB PTS system is involved in D-mannitol transport. The sequence is that of Mannitol-specific phosphotransferase enzyme IIA component from Staphylococcus aureus.